Reading from the N-terminus, the 442-residue chain is 5'-deoxyadenosine deaminase (442 aa).

Zn(2+) contacts are provided by H72 and H74. Residues E101 and H193 each contribute to the substrate site. H220 is a binding site for Zn(2+). 2 residues coordinate substrate: E223 and D309. D309 lines the Zn(2+) pocket.

This sequence belongs to the metallo-dependent hydrolases superfamily. MTA/SAH deaminase family. In terms of assembly, homotetramer. Zn(2+) serves as cofactor.

It carries out the reaction 5'-deoxyadenosine + H2O + H(+) = 5'-deoxyinosine + NH4(+). The enzyme catalyses S-adenosyl-L-homocysteine + H2O + H(+) = S-inosyl-L-homocysteine + NH4(+). It catalyses the reaction S-methyl-5'-thioadenosine + H2O + H(+) = S-methyl-5'-thioinosine + NH4(+). The catalysed reaction is adenosine + H2O + H(+) = inosine + NH4(+). The protein operates within amino-acid biosynthesis; S-adenosyl-L-methionine biosynthesis. Functionally, catalyzes the deamination of three SAM-derived enzymatic products, namely 5'-deoxyadenosine, S-adenosyl-L-homocysteine, and 5'-methylthioadenosine, to produce the inosine analogs. Can also deaminate adenosine. The preferred substrate for this enzyme is 5'-deoxyadenosine, but all these substrates are efficiently deaminated. Likely functions in a S-adenosyl-L-methionine (SAM) recycling pathway from S-adenosyl-L-homocysteine (SAH) produced from SAM-dependent methylation reactions. May also be involved in the recycling of 5'-deoxyadenosine, whereupon the 5'-deoxyribose moiety of 5'-deoxyinosine is further metabolized to deoxyhexoses used for the biosynthesis of aromatic amino acids in methanogens. The polypeptide is 5'-deoxyadenosine deaminase (Methanoregula boonei (strain DSM 21154 / JCM 14090 / 6A8)).